A 288-amino-acid chain; its full sequence is Probable prolyl 4-hydroxylase 6 (288 aa).

Over 1–4 (MDSQ) the chain is Cytoplasmic. Residues 5 to 27 (YFLAFSLSLLLIFSQISSFSFSV) traverse the membrane as a helical; Signal-anchor for type II membrane protein segment. At 28–288 (DPTRITQLSW…GFCRKSCKAC (261 aa)) the chain is on the lumenal side. The region spanning 116-238 (NGEALQILHY…KWSATRWIHV (123 aa)) is the Fe2OG dioxygenase domain. Residues His-134 and Asp-136 each contribute to the Fe cation site. 2 N-linked (GlcNAc...) asparagine glycosylation sites follow: Asn-160 and Asn-210. His-219 contributes to the Fe cation binding site. Lys-229 lines the 2-oxoglutarate pocket. In terms of domain architecture, ShKT spans 248–288 (CVDDHESCQEWADAGECEKNPMYMVGSETSLGFCRKSCKAC). Intrachain disulfides connect Cys-248/Cys-288, Cys-255/Cys-281, and Cys-264/Cys-285.

Belongs to the P4HA family. It depends on Fe(2+) as a cofactor. L-ascorbate serves as cofactor.

It localises to the endoplasmic reticulum membrane. It catalyses the reaction L-prolyl-[collagen] + 2-oxoglutarate + O2 = trans-4-hydroxy-L-prolyl-[collagen] + succinate + CO2. In terms of biological role, catalyzes the post-translational formation of 4-hydroxyproline in -Xaa-Pro-Gly- sequences in proline-rich peptide sequences of plant glycoproteins and other proteins. Hydroxyprolines are important constituent of many plant cell wall glycoproteins such as extensins, hydroxyproline-rich glycoproteins, lectins and arabinogalactan proteins. This is Probable prolyl 4-hydroxylase 6 from Arabidopsis thaliana (Mouse-ear cress).